The chain runs to 384 residues: Putative glycosyltransferase EpsF (384 aa).

Belongs to the glycosyltransferase group 1 family. Glycosyltransferase 4 subfamily.

Its function is as follows. May be involved in the production of the exopolysaccharide (EPS) component of the extracellular matrix during biofilm formation. EPS is responsible for the adhesion of chains of cells into bundles. Required for biofilm maintenance. The protein is Putative glycosyltransferase EpsF (epsF) of Bacillus subtilis (strain 168).